We begin with the raw amino-acid sequence, 287 residues long: Inorganic pyrophosphatase (287 aa).

Arg-79 is a binding site for diphosphate. Mg(2+)-binding residues include Asp-116, Asp-121, and Asp-153. Positions 244–258 are enriched in polar residues; the sequence is NSTLGNSDSVDSSKL. Positions 244-269 are disordered; it reads NSTLGNSDSVDSSKLASIPRGENLPP.

Belongs to the PPase family. Requires Mg(2+) as cofactor.

The protein resides in the cytoplasm. The catalysed reaction is diphosphate + H2O = 2 phosphate + H(+). Functionally, involved in osmoadaptation. This Emericella nidulans (strain FGSC A4 / ATCC 38163 / CBS 112.46 / NRRL 194 / M139) (Aspergillus nidulans) protein is Inorganic pyrophosphatase (ipp1).